We begin with the raw amino-acid sequence, 562 residues long: NAD-dependent malic enzyme (562 aa).

Tyrosine 101 acts as the Proton donor in catalysis. Position 154 (arginine 154) interacts with NAD(+). Catalysis depends on lysine 172, which acts as the Proton acceptor. Positions 243, 244, and 267 each coordinate a divalent metal cation. NAD(+) contacts are provided by aspartate 267 and asparagine 415.

The protein belongs to the malic enzymes family. As to quaternary structure, homotetramer. Requires Mg(2+) as cofactor. Mn(2+) serves as cofactor.

The enzyme catalyses (S)-malate + NAD(+) = pyruvate + CO2 + NADH. The catalysed reaction is oxaloacetate + H(+) = pyruvate + CO2. The sequence is that of NAD-dependent malic enzyme from Vibrio parahaemolyticus serotype O3:K6 (strain RIMD 2210633).